A 231-amino-acid chain; its full sequence is 2-C-methyl-D-erythritol 4-phosphate cytidylyltransferase (231 aa).

It belongs to the IspD/TarI cytidylyltransferase family. IspD subfamily.

It carries out the reaction 2-C-methyl-D-erythritol 4-phosphate + CTP + H(+) = 4-CDP-2-C-methyl-D-erythritol + diphosphate. It participates in isoprenoid biosynthesis; isopentenyl diphosphate biosynthesis via DXP pathway; isopentenyl diphosphate from 1-deoxy-D-xylulose 5-phosphate: step 2/6. Functionally, catalyzes the formation of 4-diphosphocytidyl-2-C-methyl-D-erythritol from CTP and 2-C-methyl-D-erythritol 4-phosphate (MEP). In Pseudoalteromonas atlantica (strain T6c / ATCC BAA-1087), this protein is 2-C-methyl-D-erythritol 4-phosphate cytidylyltransferase.